Consider the following 2554-residue polypeptide: DnaJ homolog subfamily C GRV2 (2554 aa).

Disordered stretches follow at residues aspartate 746–leucine 766 and glutamine 810–serine 833. Polar residues predominate over residues aspartate 815–alanine 825. 2 coiled-coil regions span residues threonine 925–serine 951 and arginine 1518–glutamine 1546. Residues leucine 1524–glycine 1606 form the J domain. 2 disordered regions span residues isoleucine 1960–glycine 1994 and serine 2339–proline 2366. The span at serine 1966–alanine 1977 shows a compositional bias: polar residues. The span at isoleucine 1982–glycine 1994 shows a compositional bias: basic and acidic residues. Positions valine 2352–proline 2366 are enriched in polar residues.

In terms of tissue distribution, constitutively expressed in roots, hypocotyls, leaves (e.g. vascular tissues), stems, flowers (e.g. petals and stigmas), siliques and pollen.

Its subcellular location is the endosome membrane. Its function is as follows. Required for endosome formation, vacuolar protein sorting and determination of the embryo growth axis. Necessary for the transport of proteins into protein storage vacuoles (PSVs). Participates in vesicle trafficking from the endosome to the central vacuole. Involved in the regulation of shoot phototropism and gravitropism, probably through the positioning of specialized amyloplasts (statoliths) in endodermal cells. The polypeptide is DnaJ homolog subfamily C GRV2 (GRV2) (Arabidopsis thaliana (Mouse-ear cress)).